The primary structure comprises 85 residues: U4-theraphotoxin-Hhn1a (85 aa).

Positions 1-22 are cleaved as a signal peptide; sequence MKVTLISILTCAAVLVLHTTAA. Positions 23–48 are excised as a propeptide; sequence EELEAESQLMEVGMPDTELAAVDEER. Disulfide bonds link cysteine 52-cysteine 66, cysteine 56-cysteine 77, and cysteine 71-cysteine 82.

It belongs to the neurotoxin 12 (Hwtx-2) family. 02 (Hwtx-2) subfamily. Monomer. Expressed by the venom gland.

The protein localises to the secreted. Functionally, neurotoxin active on both insects and mammals. This Cyriopagopus hainanus (Chinese bird spider) protein is U4-theraphotoxin-Hhn1a.